Here is a 137-residue protein sequence, read N- to C-terminus: Leaf-specific thionin (137 aa).

An N-terminal signal peptide occupies residues 1–28; it reads MATNKSIKSVVICVLILGLVLEQVQVEA. Disulfide bonds link cysteine 31–cysteine 68, cysteine 32–cysteine 60, cysteine 40–cysteine 58, and cysteine 44–cysteine 54. Residues 75–137 constitute a propeptide, acidic domain; it reads LNLLPESGEP…DGEVIQSVEA (63 aa).

This sequence belongs to the plant thionin (TC 1.C.44) family. 4 C-C subfamily.

The protein localises to the secreted. Thionins are small plant proteins which are toxic to animal cells. They seem to exert their toxic effect at the level of the cell membrane. Their precise function is not known. The protein is Leaf-specific thionin (THI1.5) of Hordeum vulgare (Barley).